The sequence spans 140 residues: Beta/delta-urticatoxin-De2a (140 aa).

An N-terminal signal peptide occupies residues 1 to 18 (MKTSTALVLLLALTATSA). Positions 19–78 (SSGDHQFIDEQNIMNVAEGKNVISSLSSSGGGDDAAAIMESVLVNGGNRKMVFMMVSGSQ) are excised as a propeptide. Cystine bridges form between Cys81–Cys95, Cys88–Cys100, Cys94–Cys108, Cys113–Cys127, Cys120–Cys131, and Cys126–Cys139.

It belongs to the urticatoxin-2 family. Expressed in trichomes, that are stiff epidermal hairs located on the surface of petioles and leaves.

It is found in the secreted. Plant defense neurotoxin that causes pain and systemic symptoms in mammals via modulation of voltage-gated sodium channels (Nav). Potent modulator of human Nav1.5/SCN5A (EC(50)=55 nM), Nav1.6/SCN8A (EC(50)=0.86 nM), and Nav1.7/SCN9A (EC(50)=208 nM), where it shifts the activation threshold to more negative potentials and delays fast inactivation. Also shifts the voltage-dependence of steady-state fast inactivation of Nav1.6/SCN8A, but not that of Nav1.5/SCN5A or Nav1.7/SCN9A. On Nav1.7/SCN9A, principally acts by binding to extracellular loops of domain IV (Nav site 3). In vivo, intraplantar injection into mice causes numerous dose-dependent, immediate, and long-lasting spontaneous pain behaviors, while no swelling is observed in the injected paw. At the highest doses tested, systemic symptoms including hypokinesia and hypersalivation are observed. The polypeptide is Beta/delta-urticatoxin-De2a (Dendrocnide excelsa (Giant stinging tree)).